The primary structure comprises 78 residues: UPF0154 protein lp_2061 (78 aa).

The chain crosses the membrane as a helical span at residues 5–27 (TGIWILIVVIGVLVGLTGGFFGA).

It belongs to the UPF0154 family.

The protein resides in the membrane. This chain is UPF0154 protein lp_2061, found in Lactiplantibacillus plantarum (strain ATCC BAA-793 / NCIMB 8826 / WCFS1) (Lactobacillus plantarum).